The primary structure comprises 246 residues: Pyridoxine 5'-phosphate synthase (246 aa).

Residue N10 coordinates 3-amino-2-oxopropyl phosphate. Residue 12–13 (DH) coordinates 1-deoxy-D-xylulose 5-phosphate. R21 serves as a coordination point for 3-amino-2-oxopropyl phosphate. H46 acts as the Proton acceptor in catalysis. Residues R48 and H53 each coordinate 1-deoxy-D-xylulose 5-phosphate. E73 (proton acceptor) is an active-site residue. T103 contributes to the 1-deoxy-D-xylulose 5-phosphate binding site. The active-site Proton donor is H193. 3-amino-2-oxopropyl phosphate is bound by residues G194 and 215 to 216 (GH).

Belongs to the PNP synthase family. As to quaternary structure, homooctamer; tetramer of dimers.

It is found in the cytoplasm. The catalysed reaction is 3-amino-2-oxopropyl phosphate + 1-deoxy-D-xylulose 5-phosphate = pyridoxine 5'-phosphate + phosphate + 2 H2O + H(+). The protein operates within cofactor biosynthesis; pyridoxine 5'-phosphate biosynthesis; pyridoxine 5'-phosphate from D-erythrose 4-phosphate: step 5/5. In terms of biological role, catalyzes the complicated ring closure reaction between the two acyclic compounds 1-deoxy-D-xylulose-5-phosphate (DXP) and 3-amino-2-oxopropyl phosphate (1-amino-acetone-3-phosphate or AAP) to form pyridoxine 5'-phosphate (PNP) and inorganic phosphate. The polypeptide is Pyridoxine 5'-phosphate synthase (Rhodopirellula baltica (strain DSM 10527 / NCIMB 13988 / SH1)).